A 383-amino-acid chain; its full sequence is Protein RecA (383 aa).

Residue 79–86 coordinates ATP; it reads GPESSGKT.

It belongs to the RecA family.

The protein resides in the cytoplasm. Functionally, can catalyze the hydrolysis of ATP in the presence of single-stranded DNA, the ATP-dependent uptake of single-stranded DNA by duplex DNA, and the ATP-dependent hybridization of homologous single-stranded DNAs. It interacts with LexA causing its activation and leading to its autocatalytic cleavage. The sequence is that of Protein RecA from Streptococcus gordonii (strain Challis / ATCC 35105 / BCRC 15272 / CH1 / DL1 / V288).